Reading from the N-terminus, the 177-residue chain is Large ribosomal subunit protein uL6 (177 aa).

Belongs to the universal ribosomal protein uL6 family. Part of the 50S ribosomal subunit.

This protein binds to the 23S rRNA, and is important in its secondary structure. It is located near the subunit interface in the base of the L7/L12 stalk, and near the tRNA binding site of the peptidyltransferase center. The protein is Large ribosomal subunit protein uL6 of Citrobacter koseri (strain ATCC BAA-895 / CDC 4225-83 / SGSC4696).